We begin with the raw amino-acid sequence, 438 residues long: Ubiquitin carboxyl-terminal hydrolase 27 (438 aa).

Residues 78–421 form the USP domain; the sequence is RGLINLGNTC…EGYLLFYHKQ (344 aa). The active-site Nucleophile is Cys-87. Residue His-380 is the Proton acceptor of the active site.

It belongs to the peptidase C19 family. As to quaternary structure, interacts with phosphorylated BCL2L11 isoform BIMEL; this interaction leads to BCL2L11 deubiquitination and stabilization.

Its subcellular location is the cytoplasm. It localises to the cytosol. It is found in the nucleus. The enzyme catalyses Thiol-dependent hydrolysis of ester, thioester, amide, peptide and isopeptide bonds formed by the C-terminal Gly of ubiquitin (a 76-residue protein attached to proteins as an intracellular targeting signal).. Its function is as follows. Deubiquitinase involved in innate antiviral immunity by mediating deubiquitination of CGAS and RIGI. Negatively regulates RIGI by mediating 'Lys-63'-linked deubiquitination of RIGI, inhibiting type I interferon signaling. Also regulates 'Lys-63'-linked ubiquitination level of MDA5/IFIH1. Acts as a positive regulator of the cGAS-STING pathway by catalyzing 'Lys-48'-linked deubiquitination of CGAS, thereby promoting its stabilization. Can reduce the levels of BCL2L11/BIM ubiquitination and stabilize BCL2L11 in response to the RAF-MAPK-degradation signal. By acting on BCL2L11 levels, may counteract the anti-apoptotic effects of MAPK activity. This chain is Ubiquitin carboxyl-terminal hydrolase 27, found in Mus musculus (Mouse).